The following is a 180-amino-acid chain: Cytidylate kinase (180 aa).

7–15 (GLPGSGTST) is a binding site for ATP.

Belongs to the cytidylate kinase family. Type 2 subfamily.

Its subcellular location is the cytoplasm. The catalysed reaction is CMP + ATP = CDP + ADP. It catalyses the reaction dCMP + ATP = dCDP + ADP. This chain is Cytidylate kinase (cmk), found in Methanosarcina mazei (strain ATCC BAA-159 / DSM 3647 / Goe1 / Go1 / JCM 11833 / OCM 88) (Methanosarcina frisia).